A 138-amino-acid polypeptide reads, in one-letter code: Translation initiation factor 2 subunit beta (138 aa).

It belongs to the eIF-2-beta/eIF-5 family. In terms of assembly, heterotrimer composed of an alpha, a beta and a gamma chain.

Functionally, eIF-2 functions in the early steps of protein synthesis by forming a ternary complex with GTP and initiator tRNA. The sequence is that of Translation initiation factor 2 subunit beta from Methanococcus maripaludis (strain DSM 14266 / JCM 13030 / NBRC 101832 / S2 / LL).